Reading from the N-terminus, the 977-residue chain is Protein HEG (977 aa).

Residues 1–27 (MMETCARRVLFTAALLVLSTVIAETFS) form the signal peptide. A disordered region spans residues 85 to 153 (AREGHSPKPL…HPVTETRTVR (69 aa)). Over residues 93–110 (PLQTSTNAADWKTSTTSD) the composition is skewed to polar residues. Over residues 112–122 (TTEHLQSDTEL) the composition is skewed to basic and acidic residues. N-linked (GlcNAc...) asparagine glycosylation occurs at Asn125. Low complexity predominate over residues 132-144 (SPSSASHSITSHH). 3 N-linked (GlcNAc...) asparagine glycosylation sites follow: Asn192, Asn200, and Asn246. Composition is skewed to polar residues over residues 200–212 (NSSISDAESQTSP) and 244–296 (GRNT…TVTS). 3 disordered regions span residues 200-391 (NSSI…TSAP), 404-445 (SLSK…TDEV), and 499-586 (AHHV…TSAS). The span at 311-323 (TSYTQTSSDSASS) shows a compositional bias: low complexity. Over residues 325 to 366 (LPFTSSEHNVTSTSQESHNSTLIYSTNTGGSTEFSTGSVSST) the composition is skewed to polar residues. 2 N-linked (GlcNAc...) asparagine glycosylation sites follow: Asn333 and Asn343. Basic and acidic residues predominate over residues 367–384 (AHEETERSSTRIVDETTL). Polar residues-rich tracts occupy residues 404–435 (SLSKFPSGQSPTIPKTDDQTNTQVVPTSTHRP), 499–538 (AHHVPTLTTSGPQAPSTADSSDVTTLHLETSTATPGNTTA), 545–563 (TPFSKSSPGRTTVVVTTGH), and 570–586 (TETGSATTQMPLRTSAS). An N-linked (GlcNAc...) asparagine glycan is attached at Asn535. The EGF-like 1 domain occupies 587–624 (PGHVCGPKTCANGGHCVRSAEGSYYCQCLSAWTGPFCT). 6 disulfide bridges follow: Cys591/Cys602, Cys596/Cys612, Cys614/Cys623, Cys630/Cys641, Cys635/Cys650, and Cys652/Cys664. One can recognise an EGF-like 2; calcium-binding domain in the interval 626–665 (DVDECVNSPCPQGSVCVNTGGSFSCECDLGFDLEDGRSCT). Residues Asn677, Asn699, Asn734, and Asn750 are each glycosylated (N-linked (GlcNAc...) asparagine). Residues 846–866 (IAVVVSPAGGALLLIVVIALI) traverse the membrane as a helical segment.

In terms of assembly, interacts with CCM2 and KRIT1; KRIT1 markedly facilitates interaction with CCM2.

The protein resides in the cell membrane. It localises to the cell junction. Its subcellular location is the secreted. Its function is as follows. Receptor component of the CCM signaling pathway which is a crucial regulator of heart and vessel formation and integrity. May act through the stabilization of endothelial cell junctions. In Danio rerio (Zebrafish), this protein is Protein HEG (heg).